The chain runs to 148 residues: Putative nickel-responsive regulator (148 aa).

Residues histidine 88, histidine 99, histidine 101, and cysteine 107 each coordinate Ni(2+).

It belongs to the transcriptional regulatory CopG/NikR family. Homotetramer. Ni(2+) serves as cofactor.

Transcriptional regulator. The chain is Putative nickel-responsive regulator from Helicobacter pylori (strain J99 / ATCC 700824) (Campylobacter pylori J99).